The chain runs to 476 residues: Glycogen synthase (476 aa).

Residue Lys-15 coordinates ADP-alpha-D-glucose.

Belongs to the glycosyltransferase 1 family. Bacterial/plant glycogen synthase subfamily.

The enzyme catalyses [(1-&gt;4)-alpha-D-glucosyl](n) + ADP-alpha-D-glucose = [(1-&gt;4)-alpha-D-glucosyl](n+1) + ADP + H(+). The protein operates within glycan biosynthesis; glycogen biosynthesis. Synthesizes alpha-1,4-glucan chains using ADP-glucose. The chain is Glycogen synthase from Bacillus cereus (strain ATCC 10987 / NRS 248).